Here is a 212-residue protein sequence, read N- to C-terminus: Ropporin-1 (212 aa).

Residues 12 to 43 (PELPELLKQFTKAAIRTQPPDLIQWAAEYFGA) form the RIIa domain. Phosphoserine is present on Ser56. Residues 209 to 212 (VRLE) are interaction with RHPN1.

It belongs to the ropporin family. As to quaternary structure, homodimer. Interacts with AKAP3. May interact with SPA17. Interacts with RHPN1. Interacts with FSCB; the interaction increases upon spermatozoa capacitation conditions. Interacts with CFAP61. Sumoylated, sumoylation decreases upon spermatozoa capacitation conditions.

The protein localises to the cell projection. It is found in the cilium. It localises to the flagellum. Its function is as follows. Important for male fertility. With ROPN1L, involved in fibrous sheath integrity and sperm motility, plays a role in PKA-dependent signaling processes required for spermatozoa capacitation. The chain is Ropporin-1 (Ropn1) from Rattus norvegicus (Rat).